The primary structure comprises 253 residues: RAD51-associated protein 1 (253 aa).

Positions 32-51 (APLTKKSRTQPKEPKKENKK) are interaction with DNA. Disordered stretches follow at residues 33 to 74 (PLTK…TSLD), 141 to 169 (DREH…EGND), and 184 to 244 (KKIK…WVPP). A compositionally biased stretch (acidic residues) spans 154–169 (PDEESEEDSDYREGND). Over residues 184–195 (KKIKRQTRKEKK) the composition is skewed to basic residues. An interaction with DNA region spans residues 190-241 (TRKEKKTPKSENNTTVMELKSEQTQKMMSTSSEPVGRPLYTSSPVTNKKPKW). The segment covering 199–222 (SENNTTVMELKSEQTQKMMSTSSE) has biased composition (polar residues).

As to quaternary structure, monomer.

It is found in the chromosome. It localises to the nucleus. Structure-specific DNA-binding protein involved in DNA repair by promoting RAD51-mediated homologous recombination. Acts by stimulating D-Loop formation by RAD51: specifically enhances joint molecule formation through its structure-specific DNA interaction and its interaction with RAD51. Binds single-stranded DNA (ssDNA), double-stranded DNA (dsDNA) and secondary DNA structures, such as D-loop structures: has a strong preference for branched-DNA structures that are obligatory intermediates during joint molecule formation. Involved in mitotic recombination-dependent replication fork processing. Also involved in meiosis by promoting DMC1-mediated homologous meiotic recombination. In Gallus gallus (Chicken), this protein is RAD51-associated protein 1.